The primary structure comprises 246 residues: Sugar fermentation stimulation protein homolog (246 aa).

This sequence belongs to the SfsA family.

The chain is Sugar fermentation stimulation protein homolog from Prochlorococcus marinus (strain MIT 9215).